The chain runs to 323 residues: Palmitoyltransferase ZDHHC20-B (323 aa).

Residues 1–14 (MAPTHVLRCCQRGL) lie on the Cytoplasmic side of the membrane. Residues 15–35 (AWIPVIFIALVVCWSYYAYVV) form a helical membrane-spanning segment. Over 36-41 (ELCLLV) the chain is Lumenal. The chain crosses the membrane as a helical span at residues 42–62 (YLVVFHLSFVMFVWSYWKTIF). The Cytoplasmic portion of the chain corresponds to 63–157 (TKPANPSKEF…NNCVGFSNYK (95 aa)). The DHHC domain occupies 114 to 164 (RYCDRCQVIKPDRCHHCSACDMCVLKMDHHCPWVNNCVGFSNYKFFILFLT). Cys144 serves as the catalytic S-palmitoyl cysteine intermediate. Residues 158–178 (FFILFLTYSLVYCLFIAASVL) traverse the membrane as a helical segment. Residues 179 to 195 (QYFIKFWTSDLPESHAK) lie on the Lumenal side of the membrane. The chain crosses the membrane as a helical span at residues 196-219 (FHVLFLFFVAAMFCISILSLFTYH). Topologically, residues 220–323 (LWLVGKNRST…KQAKKKKTDE (104 aa)) are cytoplasmic.

The protein belongs to the DHHC palmitoyltransferase family.

The protein localises to the golgi apparatus membrane. It is found in the cell membrane. The protein resides in the cytoplasm. It localises to the perinuclear region. Its subcellular location is the endoplasmic reticulum membrane. The protein localises to the endoplasmic reticulum-Golgi intermediate compartment membrane. It catalyses the reaction L-cysteinyl-[protein] + hexadecanoyl-CoA = S-hexadecanoyl-L-cysteinyl-[protein] + CoA. The enzyme catalyses L-cysteinyl-[protein] + tetradecanoyl-CoA = S-tetradecanoyl-L-cysteinyl-[protein] + CoA. It carries out the reaction L-cysteinyl-[protein] + octadecanoyl-CoA = S-octadecanoyl-L-cysteinyl-[protein] + CoA. Palmitoyltransferase that could catalyze the addition of palmitate onto various protein substrates. Catalyzes palmitoylation of Cys residues on protein substrates and has a preference for acyl-CoA with C16 fatty acid chains but may also utilize acyl-CoA with C14 and C18 fatty acid chains. The protein is Palmitoyltransferase ZDHHC20-B (zdhhc20b) of Danio rerio (Zebrafish).